The primary structure comprises 634 residues: Probable sulfate transporter 3.5 (634 aa).

A compositionally biased stretch (polar residues) spans 1–12 (MENTITSSTSSP). The tract at residues 1-25 (MENTITSSTSSPKGRGVNFSTPRGF) is disordered. Residues 1–81 (MENTITSSTS…KYDMQKLKYD (81 aa)) lie on the Cytoplasmic side of the membrane. Residues 82-102 (VLAGITITSLAVPQGISYAKL) form a helical membrane-spanning segment. At 103-104 (AS) the chain is on the extracellular side. A helical transmembrane segment spans residues 105-125 (IPPIIGLYSSFVPPFVYAVFG). Residues 126–130 (SSNNL) are Cytoplasmic-facing. A helical transmembrane segment spans residues 131 to 151 (AVGTVAACSLLIAETFGEEMI). Topologically, residues 152–158 (KNEPELY) are extracellular. A helical transmembrane segment spans residues 159–179 (LHLIFTATLITGLFQFAMGFL). The Cytoplasmic segment spans residues 180–195 (RLGILVDFLSHSTITG). The chain crosses the membrane as a helical span at residues 196 to 216 (FMGGTAIIILLQQLKGIFGLV). The Extracellular portion of the chain corresponds to 217–239 (HFTHKTDVVSVLHSILDNRAEWK). A helical transmembrane segment spans residues 240–260 (WQSTLAGVCFLVFLQSTRYIK). The Cytoplasmic segment spans residues 261–265 (QRYPK). A helical transmembrane segment spans residues 266–286 (LFWVSAMGPMVVVVVGCVVAY). Residues 287 to 321 (LVKGTAHGIATVGPLKKGLNPPSIQLLNFDSKYLG) lie on the Extracellular side of the membrane. A helical transmembrane segment spans residues 322–342 (MVFKAGIVTGLIALAEGIAIG). The Cytoplasmic portion of the chain corresponds to 343–358 (RSFAVMKNEQTDGNKE). Residues 359 to 379 (MIAFGLMNVIGSFTSCYLTTG) form a helical membrane-spanning segment. Topologically, residues 380–395 (PFSKTAVNYNAGTKTP) are extracellular. Residues 396–416 (MSNVVMGVCMMLVLLFLAPLF) traverse the membrane as a helical segment. At 417–420 (SYTP) the chain is on the cytoplasmic side. Residues 421 to 441 (LVGLSAIIMSAMLGLINYEEM) traverse the membrane as a helical segment. The Extracellular segment spans residues 442-458 (YHLFKVDKFDFLVCMSA). Residues 459–479 (FFGVSFLSMDYGLIISVGFSI) traverse the membrane as a helical segment. Over 480–634 (VRALLYVARP…FNLTTTKPEV (155 aa)) the chain is Cytoplasmic. Positions 508–623 (QYPASEEMLG…LSIDDAVQAC (116 aa)) constitute an STAS domain.

Belongs to the SLC26A/SulP transporter (TC 2.A.53) family.

Its subcellular location is the membrane. Its function is as follows. H(+)/sulfate cotransporter that may play a role in the regulation of sulfate assimilation. The protein is Probable sulfate transporter 3.5 (SULTR3;5) of Arabidopsis thaliana (Mouse-ear cress).